Consider the following 298-residue polypeptide: ATP synthase gamma chain (298 aa).

Belongs to the ATPase gamma chain family. F-type ATPases have 2 components, CF(1) - the catalytic core - and CF(0) - the membrane proton channel. CF(1) has five subunits: alpha(3), beta(3), gamma(1), delta(1), epsilon(1). CF(0) has three main subunits: a, b and c.

It is found in the cell membrane. Functionally, produces ATP from ADP in the presence of a proton gradient across the membrane. The gamma chain is believed to be important in regulating ATPase activity and the flow of protons through the CF(0) complex. In Frankia casuarinae (strain DSM 45818 / CECT 9043 / HFP020203 / CcI3), this protein is ATP synthase gamma chain.